Consider the following 328-residue polypeptide: Serine/threonine protein kinase RdoA (328 aa).

The Proton acceptor role is filled by D201. N206 and D217 together coordinate Mg(2+). D217 is a catalytic residue.

It belongs to the SrkA/RdoA protein kinase family. Monomer. Mg(2+) is required as a cofactor.

It is found in the cytoplasm. The catalysed reaction is L-seryl-[protein] + ATP = O-phospho-L-seryl-[protein] + ADP + H(+). It catalyses the reaction L-threonyl-[protein] + ATP = O-phospho-L-threonyl-[protein] + ADP + H(+). Its function is as follows. A protein kinase that (auto)phosphorylates on Ser and Thr residues, probably involved in the extracytoplasmic stress response. Probably acts to suppress the effects of stress linked to accumulation of reactive oxygen species. The chain is Serine/threonine protein kinase RdoA from Salmonella typhimurium (strain LT2 / SGSC1412 / ATCC 700720).